Reading from the N-terminus, the 358-residue chain is S-adenosylmethionine:tRNA ribosyltransferase-isomerase (358 aa).

The protein belongs to the QueA family. As to quaternary structure, monomer.

It is found in the cytoplasm. It catalyses the reaction 7-aminomethyl-7-carbaguanosine(34) in tRNA + S-adenosyl-L-methionine = epoxyqueuosine(34) in tRNA + adenine + L-methionine + 2 H(+). It functions in the pathway tRNA modification; tRNA-queuosine biosynthesis. Its function is as follows. Transfers and isomerizes the ribose moiety from AdoMet to the 7-aminomethyl group of 7-deazaguanine (preQ1-tRNA) to give epoxyqueuosine (oQ-tRNA). The chain is S-adenosylmethionine:tRNA ribosyltransferase-isomerase from Rhodopseudomonas palustris (strain BisA53).